Here is a 247-residue protein sequence, read N- to C-terminus: 23S rRNA (guanosine-2'-O-)-methyltransferase RlmB (247 aa).

Residues glycine 197, isoleucine 217, and leucine 226 each contribute to the S-adenosyl-L-methionine site.

It belongs to the class IV-like SAM-binding methyltransferase superfamily. RNA methyltransferase TrmH family. RlmB subfamily.

The protein localises to the cytoplasm. The enzyme catalyses guanosine(2251) in 23S rRNA + S-adenosyl-L-methionine = 2'-O-methylguanosine(2251) in 23S rRNA + S-adenosyl-L-homocysteine + H(+). Specifically methylates the ribose of guanosine 2251 in 23S rRNA. The chain is 23S rRNA (guanosine-2'-O-)-methyltransferase RlmB from Burkholderia sp.